A 1186-amino-acid chain; its full sequence is DNA excision repair protein ERCC-5 (1186 aa).

Positions 1-78 are N-domain; sequence MGVQGLWKLL…RIRPIFVFDG (78 aa). Lysine 8 is modified (N6-acetyllysine). Aspartate 30 provides a ligand contact to Mg(2+). Residues 31–67 are DNA-binding; may bind to the undamaged single-strand DNA of the DNA repair bubble; sequence ISIWLNQALKGVRDRHGNSIENPHLLTLFHRLCKLLF. Residue aspartate 77 coordinates Mg(2+). Residues 79 to 785 are spacer region; that stretch reads DAPLLKKQTL…LRLFGIPYIQ (707 aa). Disordered regions lie at residues 306–342, 354–385, 404–473, 510–533, and 667–724; these read ESLP…PPSP, GSSS…SISP, CAGD…SVPK, HSDA…TNSV, and QAEF…AEDS. The segment covering 325–336 has biased composition (basic and acidic residues); the sequence is PCEKLKTEKEPD. Serine 384 is modified (phosphoserine). The segment covering 454-472 has biased composition (basic and acidic residues); the sequence is AEEHVASTNEGREPTDSVP. Residue serine 705 is modified to Phosphoserine. Positions 786-881 are I-domain; sequence APMEAEAQCA…VTAMEILNEF (96 aa). Mg(2+) contacts are provided by glutamate 789, glutamate 791, aspartate 810, and aspartate 812. Residues 820-836 form a DNA-binding; may bind to the undamaged single-strand DNA of the DNA repair bubble region; that stretch reads HVYRNFFNKNKFVEYYQ. Residues 848–880 form a DNA-binding; H2TH (helix-2turn-helix) motif which binds double-stranded DNA region; sequence RNKLINLAYLLGSDYTEGIPTVGCVTAMEILNE. Aspartate 861 provides a ligand contact to Mg(2+). The interval 912–918 is DNA-binding; may bind double-stranded DNA; that stretch reads TKVKKKL. The interaction with PCNA stretch occupies residues 981-1009; sequence LKQLDAQQTQLRIDSFFRLAQQEKEDAKR. The interaction with ERCC6/CSB stretch occupies residues 1011-1186; that stretch reads KSQRLNRAVT…RRARGRKRKT (176 aa). 2 disordered regions span residues 1056–1081 and 1095–1186; these read QKRG…SKGK and ESSD…KRKT. The short motif at 1057-1074 is the Nuclear localization signal 1 element; sequence KRGITNTLEESSSLKRKR. The segment covering 1124–1133 has biased composition (polar residues); that stretch reads TSASDSQNSV. Positions 1169-1186 match the Nuclear localization signal 2 motif; sequence FGKKRRKLRRARGRKRKT. Residues 1169 to 1186 are compositionally biased toward basic residues; sequence FGKKRRKLRRARGRKRKT.

Belongs to the XPG/RAD2 endonuclease family. XPG subfamily. In terms of assembly, monomer. Homodimer. Component of the homologous recombination repair (HR) complex composed of ERCC5/XPG, BRCA2, PALB2, DSS1 and RAD51. Within the complex, interacts with BRCA2 and PALB2. Interacts with RNA polymerase II. Interacts (via C-terminus) with ERCC6/CSB; the interaction stimulates ERCC6/CSB binding to the DNA repair bubble and ERCC6/CSB ATPase activity. May form a complex composed of RNA polymerase II, ERCC6/CSB and ERCC5/XPG which associates with the DNA repair bubble during transcription-coupled nucleotide excision repair. Interacts with BRCA1; the interaction promotes the release of BRCA1 from DNA. Interacts with PCNA. Interacts with NTHL1; the interaction stimulates NTHL1 activity and NTHL1 binding to its DNA substrate. It depends on Mg(2+) as a cofactor.

The protein localises to the nucleus. It is found in the chromosome. In terms of biological role, single-stranded structure-specific DNA endonuclease involved in DNA excision repair. Makes the 3'incision in DNA nucleotide excision repair (NER). Binds and bends DNA repair bubble substrate and breaks base stacking at the single-strand/double-strand DNA junction of the DNA bubble. Plays a role in base excision repair (BER) by promoting the binding of DNA glycosylase NTHL1 to its substrate and increasing NTHL1 catalytic activity that removes oxidized pyrimidines from DNA. Involved in transcription-coupled nucleotide excision repair (TCR) which allows RNA polymerase II-blocking lesions to be rapidly removed from the transcribed strand of active genes. Functions during the initial step of TCR in cooperation with ERCC6/CSB to recognized stalled RNA polymerase II. Also, stimulates ERCC6/CSB binding to the DNA repair bubble and ERCC6/CSB ATPase activity. Required for DNA replication fork maintenance and preservation of genomic stability. Involved in homologous recombination repair (HRR) induced by DNA replication stress by recruiting RAD51, BRCA2, and PALB2 to the damaged DNA site. In TFIIH stimulates the 5'-3' helicase activity of XPD/ERCC2 and the DNA translocase activity of XPB/ERCC3. During HRR, binds to the replication fork with high specificity and stabilizes it. Also, acts upstream of HRR, to promote the release of BRCA1 from DNA. This chain is DNA excision repair protein ERCC-5 (ERCC5), found in Homo sapiens (Human).